The sequence spans 1362 residues: MNSSAPSPGPSSRLYRSINSRDDLSQQRYVLRPPDDIHPLVDPARIGDSVYPDFYPWKRSTDEEDARMVDNLQKGYAEPPSVPHESQSAKKSIASLLRIKSNMTALSCFIITAMHIRVDTCRITTPGTFKPPPRVTLTDHKREAWLKDLANPAVPLRKLSRTIPHGIRNKVLLDQCCAKRIAPSRAVWFARCVGANELRGLKRKGHHQMGNMSEAIWLQEWTECVVDVLQRSSVAFLRAEGEPQARQTAKQNFAYMWVVGLLSDDNTKDTKAGSGVAPGTGASTTSKLSSVEKLPVAILIIRTFWKPLLTFPNLAKKLAQNLLAELSKLEADAHSDKPFYQPTIKALSTLVNALFDAQPDAFVMPSKWVQLGSTFEAIVSDSESTRVRNEALVISDTPKTRRTRNKQAVIISILDAARAPFDKTLFNQIVDTRADFGTIIQTILAWAVSDSRVSVERVFIASHLVSQLSEGVDGDAVPSHIVQFLLSVKSHLDVRIDDLYALVTELCVLDIFQPQDYVRSLISSGVLYISRLSEWANVQLDILGNLPLVAVPSSCQVQVRYMVRKVAKYASYNENELLERTNNALRVLLPGVFDSQAEDVDMSSSSSSLSDSTNIPYSEFTQNTRIVVAENLYTSLCAAVERGYVPTTQEFAQYQLILENLHAWRLMCASIQLIVPKCTQSHLLYFLASATRYQWQAFACIADMPALVKVFMHQYRGLRKVRVSRELWDLVQFSAQQLPELKPELETLLKNSSSPQLSPISEVTPQTDSEATKDVNLPQALNDLLLHSSDVRTSCKMLANYKDDSQFSNQLMTWLRDQEVSLQLLQTLVFLVVYECTCIEKVGDLFLQIHNLRDMSGGSRLLLSLIARDLTQEYSLSTTEAFSLQFQRKLFADQHPRIYLRLVAQYLFEREVFQDPQWLDDVDTFCKEVAVHHPALFSQLIVDPVIEPDNAVAASSLQQLLNHLLKLDLGTGTSLADDLQQLITHVTPFNMFLAQTQLRLLFAHRGRISKDPVAMDTSPELTINSTTPSTDTTDEDVSVLFRVLSDPGLLKLPPFFGDLFSELPGELKGRILARAETTFLTSPNFPRVGEDNIVSLLIELADSLADSVTEDVCKTQTFALSSGLQRLVEASVREPHPPGLAEGISMFLKIAMIHEKSLMASEDAEVTMLRNHVVEGLQALLDSPFVATTPDLKATLQDTWTALKSELSEVAEPANSAPSKAGPTRDLLLYSTANDAFSEVTVRSFDLLEESNPTMGVNDAALNLALFNATIEKRIPIAWNNGHKRQLVDGGRGGRKTARGTDSSLVPTILEGIPRCMDEYSNHWELFFCFYLYTMRASEVHDLRANRASSFERRASSVELLA.

Positions 31 to 51 (LRPPDDIHPLVDPARIGDSVY) are disordered.

It belongs to the Mediator complex subunit 12 family. In terms of assembly, component of the SRB8-11 complex, which itself associates with the Mediator complex.

Its subcellular location is the nucleus. In terms of biological role, component of the SRB8-11 complex. The SRB8-11 complex is a regulatory module of the Mediator complex which is itself involved in regulation of basal and activated RNA polymerase II-dependent transcription. The SRB8-11 complex may be involved in the transcriptional repression of a subset of genes regulated by Mediator. It may inhibit the association of the Mediator complex with RNA polymerase II to form the holoenzyme complex. This chain is Mediator of RNA polymerase II transcription subunit 12 (SRB8), found in Yarrowia lipolytica (strain CLIB 122 / E 150) (Yeast).